The following is a 372-amino-acid chain: 4-hydroxybenzoate polyprenyltransferase, mitochondrial (372 aa).

Residues 1-42 (MFIWQRKSILLGRSILGSGRVTVAGIIGSSRKRYTSSSSSSS) constitute a mitochondrion transit peptide. 7 helical membrane-spanning segments follow: residues 92-112 (PVGT…GAMM), 114-134 (GATL…ALVM), 171-191 (ALVF…LLPA), 193-213 (CWWL…FKRF), 229-249 (ALLG…PLYL), 298-318 (IALL…GFIG), and 352-372 (TGLY…FGFL).

Belongs to the UbiA prenyltransferase family. Mg(2+) is required as a cofactor.

Its subcellular location is the mitochondrion inner membrane. It carries out the reaction an all-trans-polyprenyl diphosphate + 4-hydroxybenzoate = a 4-hydroxy-3-(all-trans-polyprenyl)benzoate + diphosphate. It participates in cofactor biosynthesis; ubiquinone biosynthesis. In terms of biological role, catalyzes the prenylation of para-hydroxybenzoate (PHB) with an all-trans polyprenyl group. Mediates the second step in the final reaction sequence of coenzyme Q (CoQ) biosynthesis, which is the condensation of the polyisoprenoid side chain with PHB, generating the first membrane-bound Q intermediate. The sequence is that of 4-hydroxybenzoate polyprenyltransferase, mitochondrial from Saccharomyces cerevisiae (strain ATCC 204508 / S288c) (Baker's yeast).